The chain runs to 416 residues: Trehalose synthase (416 aa).

Belongs to the glycosyltransferase group 1 family. Glycosyltransferase 4 subfamily. Homodimer. It depends on Mg(2+) as a cofactor.

It carries out the reaction an NDP-alpha-D-glucose + D-glucose = alpha,alpha-trehalose + a ribonucleoside 5'-diphosphate + H(+). Inhibited by 20 mM Fe(3+) and Mn(2+). Partially inhibited by Zn(2+) and Ni(2+). Activity is slightly enhanced by 2 mM Fe (3+), Mn (2+), Ca(2+) or Li(+) and by 20 mM Mg(2+), Ca(2+) or Li(+). Its function is as follows. Synthesizes trehalose from ADP-glucose and glucose. The reaction is reversible, the equilibrium strongly favors trehalose synthesis. The sequence is that of Trehalose synthase from Rubrobacter xylanophilus (strain DSM 9941 / JCM 11954 / NBRC 16129 / PRD-1).